A 409-amino-acid chain; its full sequence is Peptidase T (409 aa).

H78 contributes to the Zn(2+) binding site. The active site involves D80. Residue D140 coordinates Zn(2+). Residue E173 is the Proton acceptor of the active site. Residues E174, D196, and H379 each coordinate Zn(2+).

This sequence belongs to the peptidase M20B family. Zn(2+) serves as cofactor.

It is found in the cytoplasm. The enzyme catalyses Release of the N-terminal residue from a tripeptide.. Cleaves the N-terminal amino acid of tripeptides. This Salmonella paratyphi A (strain ATCC 9150 / SARB42) protein is Peptidase T.